Here is a 366-residue protein sequence, read N- to C-terminus: RNA 3'-terminal phosphate cyclase (366 aa).

Residues Gln104, Pro131, Tyr294, Asp297, Gln298, and His320 each contribute to the ATP site. The active-site Tele-AMP-histidine intermediate is the His320.

The protein belongs to the RNA 3'-terminal cyclase family. Type 1 subfamily.

It localises to the nucleus. It is found in the nucleoplasm. The enzyme catalyses a 3'-end 3'-phospho-ribonucleotide-RNA + ATP = a 3'-end 2',3'-cyclophospho-ribonucleotide-RNA + AMP + diphosphate. Its function is as follows. Catalyzes the conversion of 3'-phosphate to a 2',3'-cyclic phosphodiester at the end of RNA. The mechanism of action of the enzyme occurs in 3 steps: (A) adenylation of the enzyme by ATP; (B) transfer of adenylate to an RNA-N3'P to produce RNA-N3'PP5'A; (C) and attack of the adjacent 2'-hydroxyl on the 3'-phosphorus in the diester linkage to produce the cyclic end product. Likely functions in some aspects of cellular RNA processing. Function plays an important role in regulating axon regeneration by inhibiting central nervous system (CNS) axon regeneration following optic nerve injury. This Macaca fascicularis (Crab-eating macaque) protein is RNA 3'-terminal phosphate cyclase (RTCA).